The primary structure comprises 381 residues: Early boundary activity protein 2 (381 aa).

A disordered region spans residues 210–245; sequence NDAEDVPAPPSKRPRHMSTSSSESHIPDTASEKDEK. The BEN domain maps to 268-365; it reads PNGTQITAHQ…TKCADTAKKY (98 aa).

The heterotrimeric Elba complex consists of Elba1, Elba2 and Elba3.

The protein localises to the nucleus. The heterotrimeric Elba complex is required for chromatin domain boundary function during early embryogenesis. It binds to a 8-bp sequence 5'-CCAATAAG-3' in the Fab-7 insulator or boundary element in the bithorax complex and contributes to its insulator or boundary activity. Elba2 can act as a transcriptional repressor and binds the palindromic sequence 5'-CCAATTGG-3' to mediate transcriptional repression. The chain is Early boundary activity protein 2 from Drosophila melanogaster (Fruit fly).